The following is an 86-amino-acid chain: Small ribosomal subunit protein bS16 (86 aa).

It belongs to the bacterial ribosomal protein bS16 family.

The polypeptide is Small ribosomal subunit protein bS16 (Bordetella bronchiseptica (strain ATCC BAA-588 / NCTC 13252 / RB50) (Alcaligenes bronchisepticus)).